Here is a 531-residue protein sequence, read N- to C-terminus: Tyrosine 2,3-aminomutase (531 aa).

Tyrosine 51 (proton donor/acceptor) is an active-site residue. Residue histidine 81 coordinates substrate. Residues 140–142 (ASG) constitute a cross-link (5-imidazolinone (Ala-Gly)). Residue serine 141 is modified to 2,3-didehydroalanine (Ser). Residues asparagine 193 and arginine 298 each contribute to the substrate site.

This sequence belongs to the TAL/TAM family. As to quaternary structure, homotetramer; dimer of dimers. In terms of processing, contains an active site 4-methylidene-imidazol-5-one (MIO), which is formed autocatalytically by cyclization and dehydration of residues Ala-Ser-Gly.

The enzyme catalyses L-tyrosine = 3-amino-3-(4-hydroxyphenyl)propanoate. It catalyses the reaction L-tyrosine = (E)-4-coumarate + NH4(+). Its function is as follows. Has aminomutase and, to a lesser extent, ammonia-lyase activity. Primarily, catalyzes the rearrangement of L-tyrosine to R-beta-tyrosine, which is incorporated into secondary metabolites called chondramides. The aminomutase activity mainly produces R-beta-tyrosine but also S-beta tyrosine in smaller amounts. Does not accept D-tyrosine, L-histidine or L-phenylalanine as substrates. In Chondromyces crocatus, this protein is Tyrosine 2,3-aminomutase.